The chain runs to 62 residues: Enterocin E-760 (62 aa).

The protein localises to the secreted. Its function is as follows. Bacteriocin active against the Gram-negative bacteria S.enteritidis, S.choleraesuis, S.typhimurium, S.gallinarum, E.coli O157:H7, Y.enterocolitica, C.freundii, K.pneumoniae, S.dysentriae, P.aeruginosa, P.mirabilis, M.morganii, C.jejuni and 20 other Campylobacter isolates, and the Gram-positive bacteria S.aureus, S.epidermidis and L.monocytogenes. This chain is Enterocin E-760, found in Enterococcus sp.